The primary structure comprises 290 residues: Aquaporin PIP2-1 (290 aa).

The interval Met-1–Asp-20 is disordered. 2 helical membrane-spanning segments follow: residues Ala-43–Ile-63 and Cys-80–Val-100. The NPA 1 motif lies at Asn-112 to Ala-114. 3 consecutive transmembrane segments (helical) span residues Leu-131 to Phe-151, Gly-173 to Ala-193, and Val-205 to Ile-225. The short motif at Asn-233 to Ala-235 is the NPA 2 element. The chain crosses the membrane as a helical span at residues Ile-255 to Leu-275.

It belongs to the MIP/aquaporin (TC 1.A.8) family. PIP (TC 1.A.8.11) subfamily. In terms of assembly, homomers. Can interact with PIP1-2 to form heteromers. Expressed in roots.

Its subcellular location is the cell membrane. Water channel required to facilitate the transport of water across cell membrane. Active as homomers. Increased activity when heteromerization with PIP1-2. The protein is Aquaporin PIP2-1 (PIP2-1) of Zea mays (Maize).